We begin with the raw amino-acid sequence, 620 residues long: Glutathione-regulated potassium-efflux system protein KefC (620 aa).

A run of 12 helical transmembrane segments spans residues 4–24 (HTLIQALIYLGSAALIVPIAV), 26–46 (LGLGSVLGYLIAGCIIGPWGL), 54–74 (SILHFAEIGVVLMLFIIGLEL), 90–110 (GALQMVICGGLLGLFCMLLGL), 114–134 (VAELIGMTLALSSTAIAMQAM), 149–169 (FAVLLFQDIAAIPLVAMIPLL), 178–198 (MGAFALSALKVAGALVLVVLL), 218–238 (VFSAVALFLVFGFGLLLEEVG), 270–290 (GLLLGLFFIGVGMSIDFGTLL), 294–314 (LRIVILLLGFLIIKIAMLWLI), 327–347 (WFAVLLGQGSEFAFVVFGAAQ), and 359–379 (SLTLAVALSMAATPILLVILN). The region spanning 399–518 (QPRVIIAGFG…AGVEKPERET (120 aa)) is the RCK N-terminal domain. Residues 597-620 (GWQGTEEGKHTGNMADEPETKPSS) are disordered.

The protein belongs to the monovalent cation:proton antiporter 2 (CPA2) transporter (TC 2.A.37) family. KefC subfamily. In terms of assembly, homodimer. Interacts with the regulatory subunit KefF.

The protein resides in the cell inner membrane. Functionally, pore-forming subunit of a potassium efflux system that confers protection against electrophiles. Catalyzes K(+)/H(+) antiport. In Escherichia coli O7:K1 (strain IAI39 / ExPEC), this protein is Glutathione-regulated potassium-efflux system protein KefC.